The chain runs to 129 residues: Transcription antitermination protein NusB (129 aa).

The protein belongs to the NusB family.

Functionally, involved in transcription antitermination. Required for transcription of ribosomal RNA (rRNA) genes. Binds specifically to the boxA antiterminator sequence of the ribosomal RNA (rrn) operons. The sequence is that of Transcription antitermination protein NusB from Staphylococcus aureus (strain USA300 / TCH1516).